Reading from the N-terminus, the 441-residue chain is Proline--tRNA ligase (441 aa).

Belongs to the class-II aminoacyl-tRNA synthetase family. ProS type 2 subfamily. Homodimer.

The protein localises to the cytoplasm. The catalysed reaction is tRNA(Pro) + L-proline + ATP = L-prolyl-tRNA(Pro) + AMP + diphosphate. In terms of biological role, catalyzes the attachment of proline to tRNA(Pro) in a two-step reaction: proline is first activated by ATP to form Pro-AMP and then transferred to the acceptor end of tRNA(Pro). The sequence is that of Proline--tRNA ligase from Methylobacterium radiotolerans (strain ATCC 27329 / DSM 1819 / JCM 2831 / NBRC 15690 / NCIMB 10815 / 0-1).